We begin with the raw amino-acid sequence, 340 residues long: MIRIENLTKIYTSRKEQVVAIEDISLDIPKGAIYGIIGLSGAGKSTLVRCINRLEEPTGGKIIIDGQDLTAMSAVELRQARQKIGMIFQHFHLLQSRTVFDNIAFPLEIAGFKKPEIEARVKELLPLVGLEDKAHVYPSQLSGGQKQRVGIARALATNPKVLLCDEATSALDPQTTLSILNLLKDINQRFGLTIIMITHEMKVVKEICTDVAVIHESKIAEQGPVESVFIQPQSSVAKEFISTVFPNELPEDLLRELATHPNSQIVRIQFLGSRASDPIIADLMKECEVRANILYGSIDHLRSTLFGTLTLELQGDPGQLALAHQYLAQRELKVEVIQNV.

One can recognise an ABC transporter domain in the interval 2–241 (IRIENLTKIY…PQSSVAKEFI (240 aa)). 38-45 (GLSGAGKS) lines the ATP pocket.

This sequence belongs to the ABC transporter superfamily. Methionine importer (TC 3.A.1.24) family. The complex is composed of two ATP-binding proteins (MetN), two transmembrane proteins (MetI) and a solute-binding protein (MetQ).

It localises to the cell membrane. It carries out the reaction L-methionine(out) + ATP + H2O = L-methionine(in) + ADP + phosphate + H(+). The enzyme catalyses D-methionine(out) + ATP + H2O = D-methionine(in) + ADP + phosphate + H(+). Functionally, part of the ABC transporter complex MetNIQ involved in methionine import. Responsible for energy coupling to the transport system. This is Methionine import ATP-binding protein MetN from Desulfitobacterium hafniense (strain Y51).